The primary structure comprises 892 residues: Ataxin-7 (892 aa).

Basic and acidic residues predominate over residues 1 to 15; that stretch reads MSERAADDVRGEPRR. Disordered stretches follow at residues 1-74 and 195-247; these read MSER…SAAA and SKGG…SRVP. The span at 16–38 shows a compositional bias: low complexity; sequence AAAAAGGAAAAAARQQQQQQQQQ. A compositionally biased stretch (pro residues) spans 39–55; that stretch reads QPPPPQPQRQQHPPPPP. Low complexity predominate over residues 195–222; sequence SKGGSASGSNRSSSGGVLSASSSSSKLL. A Glycyl lysine isopeptide (Lys-Gly) (interchain with G-Cter in SUMO); alternate cross-link involves residue K257. K257 participates in a covalent cross-link: Glycyl lysine isopeptide (Lys-Gly) (interchain with G-Cter in SUMO2); alternate. Disordered regions lie at residues 298 to 328, 389 to 505, 616 to 730, and 818 to 892; these read PTLP…NSNN, HKNK…ESVE, KSVP…SSHS, and SHGS…KARP. Basic and acidic residues-rich tracts occupy residues 318–327 and 389–403; these read LEKKPEDNSN and HKNK…RHPD. In terms of domain architecture, SCA7 spans 334 to 401; the sequence is KRLSEREFDP…KTREKELIRH (68 aa). Pro residues-rich tracts occupy residues 405-419, 448-458, and 468-483; these read QQPP…PAPP, HTPSLPRPPGC, and IDPP…PLPA. Residues 493-502 show a composition bias toward acidic residues; sequence EEGEGDDKEE. A compositionally biased stretch (polar residues) spans 616–629; the sequence is KSVPAHGTTLNAQP. Residues 640–669 show a composition bias toward low complexity; sequence SMQSRQVSSSSSSPSTPSGLSSVPSSPMSR. Residues 670–680 show a composition bias toward basic residues; the sequence is KPQKLKSSKSL. Residues 685-695 show a composition bias toward polar residues; that stretch reads SSGNSTNCQNA. Low complexity-rich tracts occupy residues 716–730 and 840–851; these read HSSS…SSHS and SPSSSSINNSSS.

Belongs to the ataxin-7 family. Component of the SAGA transcription coactivator-HAT complex, at least composed of SUPT3H, GCN5L2, TAF5L, TAF6L, SUPT7L, TADA3L, TAD1L, TAF10, TAF12, TRRAP, TAF9 and ATXN7. The STAGA core complex is associated with a subcomplex required for histone deubiquitination composed of ATXN7L3, ENY2 and USP22. Interacts with SORBS1, PSMC1 and CRX. Interacts with TRRAP, GCN5L2 and TAF10. Interacts with alpha tubulin. Proteolytically cleaved by caspase-7 (CASP7). The cleavage may be involved in SCA7 degeneration: the isoform fragments may exert distinct toxic influences that could contribute to selective neurodegeneration. Post-translationally, sumoylation decreases the aggregation propensity and cellular toxicity of forms with an expanded poly-Gln region but has no effect on subcellular location or interaction with components of the STAGA complex. Isoform a is expressed in CNS, but is expressed predominantly in the peripherical tissues. As to expression, isoform b is expressed in CNS. Also highly expressed in the frontal lobe, skeletal muscle and spinal cord and is expressed at a lower level in the lung, lymphoblast and intestine.

It is found in the nucleus. The protein localises to the nucleolus. The protein resides in the nucleus matrix. Its subcellular location is the cytoplasm. It localises to the cytoskeleton. Functionally, acts as a component of the SAGA (aka STAGA) transcription coactivator-HAT complex. Mediates the interaction of SAGA complex with the CRX and is involved in CRX-dependent gene activation. Probably involved in tethering the deubiquitination module within the SAGA complex. Necessary for microtubule cytoskeleton stabilization. Involved in neurodegeneration. This chain is Ataxin-7 (ATXN7), found in Homo sapiens (Human).